The primary structure comprises 247 residues: Pyridoxine 5'-phosphate synthase (247 aa).

Residue N12 coordinates 3-amino-2-oxopropyl phosphate. 14–15 serves as a coordination point for 1-deoxy-D-xylulose 5-phosphate; that stretch reads DH. R23 lines the 3-amino-2-oxopropyl phosphate pocket. H48 serves as the catalytic Proton acceptor. 1-deoxy-D-xylulose 5-phosphate is bound by residues R50 and H55. Residue E75 is the Proton acceptor of the active site. T105 contributes to the 1-deoxy-D-xylulose 5-phosphate binding site. H196 (proton donor) is an active-site residue. Residues G197 and 218–219 contribute to the 3-amino-2-oxopropyl phosphate site; that span reads GH.

Belongs to the PNP synthase family. Homooctamer; tetramer of dimers.

The protein localises to the cytoplasm. The enzyme catalyses 3-amino-2-oxopropyl phosphate + 1-deoxy-D-xylulose 5-phosphate = pyridoxine 5'-phosphate + phosphate + 2 H2O + H(+). It participates in cofactor biosynthesis; pyridoxine 5'-phosphate biosynthesis; pyridoxine 5'-phosphate from D-erythrose 4-phosphate: step 5/5. Its function is as follows. Catalyzes the complicated ring closure reaction between the two acyclic compounds 1-deoxy-D-xylulose-5-phosphate (DXP) and 3-amino-2-oxopropyl phosphate (1-amino-acetone-3-phosphate or AAP) to form pyridoxine 5'-phosphate (PNP) and inorganic phosphate. This is Pyridoxine 5'-phosphate synthase from Pseudomonas fluorescens (strain Pf0-1).